A 499-amino-acid polypeptide reads, in one-letter code: Probable cytosol aminopeptidase (499 aa).

K263 and D268 together coordinate Mn(2+). Residue K275 is part of the active site. Mn(2+) contacts are provided by D286, D345, and E347. The active site involves R349.

The protein belongs to the peptidase M17 family. It depends on Mn(2+) as a cofactor.

The protein resides in the cytoplasm. The catalysed reaction is Release of an N-terminal amino acid, Xaa-|-Yaa-, in which Xaa is preferably Leu, but may be other amino acids including Pro although not Arg or Lys, and Yaa may be Pro. Amino acid amides and methyl esters are also readily hydrolyzed, but rates on arylamides are exceedingly low.. The enzyme catalyses Release of an N-terminal amino acid, preferentially leucine, but not glutamic or aspartic acids.. Presumably involved in the processing and regular turnover of intracellular proteins. Catalyzes the removal of unsubstituted N-terminal amino acids from various peptides. The sequence is that of Probable cytosol aminopeptidase from Chlamydia caviae (strain ATCC VR-813 / DSM 19441 / 03DC25 / GPIC) (Chlamydophila caviae).